We begin with the raw amino-acid sequence, 254 residues long: Phosphonates import ATP-binding protein PhnC (254 aa).

An ABC transporter domain is found at 2–246; sequence IQLKNVSKIY…VFDDIYNGGN (245 aa). 35–42 contacts ATP; sequence GLSGAGKS.

The protein belongs to the ABC transporter superfamily. Phosphonates importer (TC 3.A.1.9.1) family. As to quaternary structure, the complex is composed of two ATP-binding proteins (PhnC), two transmembrane proteins (PhnE) and a solute-binding protein (PhnD).

It is found in the cell membrane. It carries out the reaction phosphonate(out) + ATP + H2O = phosphonate(in) + ADP + phosphate + H(+). In terms of biological role, part of the ABC transporter complex PhnCDE involved in phosphonates import. Responsible for energy coupling to the transport system. The polypeptide is Phosphonates import ATP-binding protein PhnC (Lactobacillus johnsonii (strain CNCM I-12250 / La1 / NCC 533)).